A 267-amino-acid polypeptide reads, in one-letter code: 2-keto-3-deoxy-L-rhamnonate aldolase (267 aa).

Residue histidine 49 is the Proton acceptor of the active site. Residue glutamine 151 coordinates substrate. Glutamate 153 is a binding site for Mg(2+). Substrate-binding residues include alanine 178 and aspartate 179. Aspartate 179 contacts Mg(2+).

This sequence belongs to the HpcH/HpaI aldolase family. KDR aldolase subfamily. Homohexamer. The cofactor is Mg(2+).

The catalysed reaction is 2-dehydro-3-deoxy-L-rhamnonate = (S)-lactaldehyde + pyruvate. Its function is as follows. Catalyzes the reversible retro-aldol cleavage of 2-keto-3-deoxy-L-rhamnonate (KDR) to pyruvate and lactaldehyde. The polypeptide is 2-keto-3-deoxy-L-rhamnonate aldolase (Escherichia coli O157:H7).